Reading from the N-terminus, the 732-residue chain is Catalase-peroxidase (732 aa).

A cross-link (tryptophyl-tyrosyl-methioninium (Trp-Tyr) (with M-246)) is located at residues 97–220 (WHSAGTYRTG…LAAVQMGLIY (124 aa)). The Proton acceptor role is filled by His98. Positions 220 to 246 (YVNPEGPDGKPDPVAAGKDIRETFGRM) form a cross-link, tryptophyl-tyrosyl-methioninium (Tyr-Met) (with W-97). His261 lines the heme b pocket.

It belongs to the peroxidase family. Peroxidase/catalase subfamily. Homodimer or homotetramer. It depends on heme b as a cofactor. In terms of processing, formation of the three residue Trp-Tyr-Met cross-link is important for the catalase, but not the peroxidase activity of the enzyme.

The catalysed reaction is H2O2 + AH2 = A + 2 H2O. The enzyme catalyses 2 H2O2 = O2 + 2 H2O. In terms of biological role, bifunctional enzyme with both catalase and broad-spectrum peroxidase activity. This chain is Catalase-peroxidase, found in Chlorobium phaeobacteroides (strain BS1).